The following is a 695-amino-acid chain: Tail-specific protease (695 aa).

Residues 1 to 29 form the signal peptide; sequence MVMKFKMSKNVICYTWLSVCLSSAIPAFA. The PDZ domain occupies 256–316; it reads IGTTLQSEDD…RLEDLVEKIK (61 aa). Catalysis depends on charge relay system residues Ser459, Asp470, and Lys484.

This sequence belongs to the peptidase S41A family.

Its subcellular location is the cell inner membrane. The catalysed reaction is The enzyme shows specific recognition of a C-terminal tripeptide, Xaa-Yaa-Zaa, in which Xaa is preferably Ala or Leu, Yaa is preferably Ala or Tyr, and Zaa is preferably Ala, but then cleaves at a variable distance from the C-terminus. A typical cleavage is -Ala-Ala-|-Arg-Ala-Ala-Lys-Glu-Asn-Tyr-Ala-Leu-Ala-Ala.. In terms of biological role, involved in the cleavage of a C-terminal peptide of 11 residues from the precursor form of penicillin-binding protein 3 (PBP3). May be involved in protection of the bacterium from thermal and osmotic stresses. The chain is Tail-specific protease (prc) from Haemophilus influenzae (strain ATCC 51907 / DSM 11121 / KW20 / Rd).